The sequence spans 398 residues: MSWLLSTMCLVHVCGNIFCLFETTTNPEAYMKVSKIVNHWGYTSEEYEAVTEDGYILPLNRIPHGKNNINSTAPKKVVLCQHGLFSTAGVWVSNPPSNSLAFILADAGFDVWMGNSRGSTWAKKHLYLDPNSKEFWAFSFDEMIKYDLPATINFILKKTGQKQIYYIGHSQGALIALGAFSTNQKLAEKIKLCFLLAPIATLKHVEGIVSLLPYFYPTAFKVVFSEKEFLSAVAFSKLHGYSCNAKVINDGCVAIFLSMTGYVPQHLNKSRVDVYIRHSLAGTSVQTLLHYRQAIKKGVFEAYDWGSQSLNMLHYNQTTPPLYNVEDMKIPTAMWSGGKDSLADTKDVAHLVPKISNLIYHKITADFSHLDFTVGKNAYYVSNDILKLLDKSETENLH.

An N-terminal signal peptide occupies residues 1–19 (MSWLLSTMCLVHVCGNIFC). Serine 170 serves as the catalytic Nucleophile. A disulfide bond links cysteine 243 and cysteine 252. An N-linked (GlcNAc...) asparagine glycan is attached at asparagine 268. Residues aspartate 340 and histidine 369 each act as charge relay system in the active site.

This sequence belongs to the AB hydrolase superfamily. Lipase family. In terms of assembly, monomer. Post-translationally, N-glycosylated. As to expression, expressed in female lacrimal gland acinar cells from where it is secreted into tears (at protein level).

The protein resides in the secreted. Functionally, female-specific protein which lacks detectable lipase activity against a range of substrates. Binds the hydrophobic lipid 1-aminoanthracene with high affinity. This is Tear acid lipase-like protein from Mesocricetus auratus (Golden hamster).